A 365-amino-acid chain; its full sequence is MKVGNTLMAARAREGRTRVLIVDDSAMVRQALALGLSTDPRLEVVGTASGAEAARAQMAALKPDVVTLDLEMPQMDGLTFLRSYMESAPVPTVVISSLTRTSGETAMRAMEAGAVDIISKPSLGAGQGLPAIMRDVCARVWAAARARLAPPDGAAPAPVATGASEDWIHALGASTGGVQALSRILPFFPAQSPGLLVVQHMPEGFTAAFARRLDALCRMRVREAADGDLVLPGLVLIAPGGLRHMEIERAGGVCRVRLVAGAPVSYSRPSVDRMFLSLAAAAGPRVSAALLTGMGRDGAAGLLAIRRAGGRTFAQDEGSSAVFGMPLAARDLRAAEEILTLDDIPARMMLAAAADTRAPSLASND.

One can recognise a Response regulatory domain in the interval 18–135 (RVLIVDDSAM…GQGLPAIMRD (118 aa)). D69 is subject to 4-aspartylphosphate. The CheB-type methylesterase domain maps to 162 to 355 (GASEDWIHAL…ARMMLAAAAD (194 aa)). Active-site residues include S174, H200, and D297.

This sequence belongs to the CheB family. Phosphorylated by CheA. Phosphorylation of the N-terminal regulatory domain activates the methylesterase activity.

The protein localises to the cytoplasm. The enzyme catalyses [protein]-L-glutamate 5-O-methyl ester + H2O = L-glutamyl-[protein] + methanol + H(+). It catalyses the reaction L-glutaminyl-[protein] + H2O = L-glutamyl-[protein] + NH4(+). In terms of biological role, involved in chemotaxis. Part of a chemotaxis signal transduction system that modulates chemotaxis in response to various stimuli. Catalyzes the demethylation of specific methylglutamate residues introduced into the chemoreceptors (methyl-accepting chemotaxis proteins or MCP) by CheR. Also mediates the irreversible deamidation of specific glutamine residues to glutamic acid. This is Protein-glutamate methylesterase/protein-glutamine glutaminase 2 from Cereibacter sphaeroides (strain ATCC 17023 / DSM 158 / JCM 6121 / CCUG 31486 / LMG 2827 / NBRC 12203 / NCIMB 8253 / ATH 2.4.1.) (Rhodobacter sphaeroides).